A 776-amino-acid chain; its full sequence is Disintegrin and metalloproteinase domain-containing protein 28 (776 aa).

Positions 1–19 (MLQALLTVSLLLSPVPVSA) are cleaved as a signal peptide. Residues 20–193 (IKELPGVKKY…IARPATRLVK (174 aa)) constitute a propeptide that is removed on maturation. Residues 168-175 (STCGTDGV) carry the Cysteine switch motif. C170 is a Zn(2+) binding site. The Extracellular segment spans residues 194 to 666 (LNDGKVQKHE…CDDSSVVFYF (473 aa)). A Peptidase M12B domain is found at 204 to 400 (KYIEYYLVLD…KLSNCLFNAP (197 aa)). N-linked (GlcNAc...) asparagine glycosylation is found at N268 and N275. Cystine bridges form between C315/C395, C355/C379, C357/C362, and C466/C486. Zn(2+) is bound at residue H340. E341 is an active-site residue. Zn(2+) is bound by residues H344 and H350. N-linked (GlcNAc...) asparagine glycosylation occurs at N352. A Disintegrin domain is found at 408–494 (TPICGNQMVE…NCPDDRFRAN (87 aa)). N-linked (GlcNAc...) asparagine glycosylation is found at N558, N603, and N629. Positions 626–658 (KSTNCSSKCKGHAVCDHELQCQCEEGWSPPDCD) constitute an EGF-like domain. Disulfide bonds link C630-C640, C634-C646, and C648-C657. Residues 667–687 (SIVVAVLFPVAVISLVVAIVI) traverse the membrane as a helical segment. Over 688–776 (RQQSSREKQK…SSFLDSNPKA (89 aa)) the chain is Cytoplasmic. Over residues 691 to 701 (SSREKQKKDQR) the composition is skewed to basic and acidic residues. 2 disordered regions span residues 691 to 728 (SSRE…PQEM) and 746 to 776 (PASF…NPKA). The span at 709–718 (RPHKQKRKPQ) shows a compositional bias: basic residues.

Zn(2+) serves as cofactor. Post-translationally, pro-domain removal and maturation may be, at least in part, autocatalytic. As to expression, expressed at high levels in epididymis and at lower levels in lung.

Its subcellular location is the membrane. In terms of biological role, may play a role in the adhesive and proteolytic events that occur during lymphocyte emigration or may function in ectodomain shedding of lymphocyte surface target proteins, such as FASL and CD40L. May be involved in sperm maturation. This Macaca fascicularis (Crab-eating macaque) protein is Disintegrin and metalloproteinase domain-containing protein 28 (ADAM28).